The sequence spans 235 residues: Pyridoxine/pyridoxamine 5'-phosphate oxidase (235 aa).

Substrate is bound by residues 30 to 33 and Lys88; that span reads RQEY. FMN contacts are provided by residues 83-88, 98-99, Arg104, Lys105, and Gln127; these read RTVLLK and YT. Positions 145, 149, and 153 each coordinate substrate. FMN is bound by residues 162–163 and Trp207; that span reads QS. 213 to 215 is a binding site for substrate; that stretch reads RLH. An FMN-binding site is contributed by Arg217.

This sequence belongs to the pyridoxamine 5'-phosphate oxidase family. Homodimer. The cofactor is FMN.

The enzyme catalyses pyridoxamine 5'-phosphate + O2 + H2O = pyridoxal 5'-phosphate + H2O2 + NH4(+). The catalysed reaction is pyridoxine 5'-phosphate + O2 = pyridoxal 5'-phosphate + H2O2. The protein operates within cofactor metabolism; pyridoxal 5'-phosphate salvage; pyridoxal 5'-phosphate from pyridoxamine 5'-phosphate: step 1/1. It participates in cofactor metabolism; pyridoxal 5'-phosphate salvage; pyridoxal 5'-phosphate from pyridoxine 5'-phosphate: step 1/1. In terms of biological role, catalyzes the oxidation of either pyridoxine 5'-phosphate (PNP) or pyridoxamine 5'-phosphate (PMP) into pyridoxal 5'-phosphate (PLP). The chain is Pyridoxine/pyridoxamine 5'-phosphate oxidase from Bacteroides fragilis (strain YCH46).